The primary structure comprises 329 residues: Octaprenyl diphosphate synthase (329 aa).

Isopentenyl diphosphate is bound by residues Lys51, Arg54, and His83. The Mg(2+) site is built by Asp90 and Asp94. Arg99 lines the an all-trans-polyprenyl diphosphate pocket. Arg100 lines the isopentenyl diphosphate pocket. The an all-trans-polyprenyl diphosphate site is built by Lys176, Thr177, and Gln214.

This sequence belongs to the FPP/GGPP synthase family. It depends on Mg(2+) as a cofactor.

It catalyses the reaction 5 isopentenyl diphosphate + (2E,6E)-farnesyl diphosphate = all-trans-octaprenyl diphosphate + 5 diphosphate. Supplies octaprenyl diphosphate, the precursor for the side chain of the isoprenoid quinones ubiquinone and menaquinone. The polypeptide is Octaprenyl diphosphate synthase (ispB) (Haemophilus influenzae (strain ATCC 51907 / DSM 11121 / KW20 / Rd)).